The chain runs to 807 residues: Ribosome-releasing factor 2, mitochondrial (807 aa).

Residues 1–18 (MFCRKYAFQTWKQFSRFY) constitute a mitochondrion transit peptide. Positions 27 to 315 (SKTRNIGIIA…GITKYLPSPL (289 aa)) constitute a tr-type G domain. GTP contacts are provided by residues 36–43 (AHIDAGKT), 100–104 (DTPGH), and 154–157 (NKMD).

This sequence belongs to the TRAFAC class translation factor GTPase superfamily. Classic translation factor GTPase family. EF-G/EF-2 subfamily.

It localises to the mitochondrion. Functionally, mitochondrial GTPase that mediates the disassembly of ribosomes from messenger RNA at the termination of mitochondrial protein biosynthesis. Not involved in the GTP-dependent ribosomal translocation step during translation elongation. The sequence is that of Ribosome-releasing factor 2, mitochondrial from Candida dubliniensis (strain CD36 / ATCC MYA-646 / CBS 7987 / NCPF 3949 / NRRL Y-17841) (Yeast).